The chain runs to 416 residues: Peroxisomal isocitrate dehydrogenase [NADP] (416 aa).

Residues 77–79 and Arg-84 each bind NADP(+); that span reads TIT. A substrate-binding site is contributed by Thr-79. Substrate is bound by residues 96–102, Arg-111, and Arg-134; that span reads SPNGTIR. Asp-253 contributes to the Mn(2+) binding site. Lys-261 contacts NADP(+). Residue Asp-276 participates in Mn(2+) binding. NADP(+)-binding positions include 311–316 and Asn-329; that span reads GTVTRH. Positions 414-416 match the Peroxisomal targeting signal motif; it reads SRL.

It belongs to the isocitrate and isopropylmalate dehydrogenases family. The cofactor is Mg(2+). It depends on Mn(2+) as a cofactor.

Its subcellular location is the peroxisome. The enzyme catalyses D-threo-isocitrate + NADP(+) = 2-oxoglutarate + CO2 + NADPH. In terms of biological role, may be involved in response to oxidative stresses. The chain is Peroxisomal isocitrate dehydrogenase [NADP] (ICDH) from Arabidopsis thaliana (Mouse-ear cress).